A 101-amino-acid chain; its full sequence is Large ribosomal subunit protein bL21 (101 aa).

The protein belongs to the bacterial ribosomal protein bL21 family. Part of the 50S ribosomal subunit. Contacts protein L20.

Functionally, this protein binds to 23S rRNA in the presence of protein L20. In Corynebacterium diphtheriae (strain ATCC 700971 / NCTC 13129 / Biotype gravis), this protein is Large ribosomal subunit protein bL21.